The sequence spans 912 residues: WD repeat-containing protein 44 (912 aa).

3 disordered regions span residues 206–352, 399–426, and 460–481; these read DIIE…ELTD, SNDA…LKQK, and RDEV…GMPY. Residues 236 to 258 show a composition bias toward pro residues; that stretch reads NRPPQPINAPPPRPPPPARPAPP. Residues 264-278 are compositionally biased toward basic and acidic residues; sequence GDTDFDRSSGFEYQK. The span at 288-311 shows a compositional bias: polar residues; that stretch reads SPNTLTENMNRDSQPSLDLASATS. The span at 410-422 shows a compositional bias: basic and acidic residues; that stretch reads KPQSHQSETDGGK. Over residues 469–478 the composition is skewed to acidic residues; that stretch reads DDPSSSDDEG. One copy of the WD 1 repeat lies at 511–550; sequence EHVGAVWTMKFSHCGRLLASAGQDNVVRIWVLKNAFDYFN. The tract at residues 559–594 is disordered; it reads EGRVSPSPSQESLNSSKSDTDGGVFSGTDDVDPDDK. The segment covering 563 to 575 has biased composition (low complexity); the sequence is SPSPSQESLNSSK. WD repeat units follow at residues 608-646, 648-688, 693-732, 743-782, 787-826, 841-880, and 882-912; these read GHTA…CLCC, QHID…VALW, GQTK…YHTQ, RVGR…LSMK, VNSS…SKFT, AHNA…ENIP, and GALK…KNIS. Residues 861 to 882 form a disordered region; that stretch reads AETSSEKQEGDQAEPVENIPSG.

The protein localises to the cytoplasm. It is found in the cytosol. Its subcellular location is the perinuclear region. It localises to the endosome membrane. The protein resides in the golgi apparatus. The protein localises to the trans-Golgi network. Downstream effector for rab11. May be involved in vesicle recycling. May also be involved in the inhibition of the intracellular ciliogenesis pathway. The chain is WD repeat-containing protein 44 (wdr44) from Xenopus laevis (African clawed frog).